The sequence spans 134 residues: Small ribosomal subunit protein bS16 (134 aa).

Positions 105–134 (EAERRQKRLTAKTRRRQAKKAAEAAGSAEG) are disordered. Residues 109–123 (RQKRLTAKTRRRQAK) show a composition bias toward basic residues.

It belongs to the bacterial ribosomal protein bS16 family.

This Chlorobaculum parvum (strain DSM 263 / NCIMB 8327) (Chlorobium vibrioforme subsp. thiosulfatophilum) protein is Small ribosomal subunit protein bS16.